A 130-amino-acid polypeptide reads, in one-letter code: Calcitonin gene-related peptide 2 (130 aa).

The N-terminal stretch at 1–26 is a signal peptide; the sequence is MDFWKFFPFLALSTIWVLCLASSLQA. A propeptide spanning residues 27-82 is cleaved from the precursor; that stretch reads APFRSALESSLDLGTLGDQEKHLLLAALMQDYEQMKARKLEQEEQETKGSRVTAQK. Residues C85 and C90 are joined by a disulfide bond. F120 carries the post-translational modification Phenylalanine amide. Residues 127–130 constitute a propeptide that is removed on maturation; that stretch reads DLQA.

Belongs to the calcitonin family. As to expression, detected in nerve cells of cerebrum, hippocampus and pons/midbrain in newborns, and only in nerve cells of pons/midbrain in adult.

It localises to the secreted. In terms of biological role, CALCB/CGRP2 is a peptide hormone that induces vasodilation mediated by the CALCRL-RAMP1 receptor complex. Dilates a variety of vessels including the coronary, cerebral and systemic vasculature. Its abundance in the CNS also points toward a neurotransmitter or neuromodulator role. This is Calcitonin gene-related peptide 2 from Mus musculus (Mouse).